The following is a 345-amino-acid chain: MKTLQELTRPNIWRLKPYSSARDEYSGAAASVFLDANENPYNLPHNRYPDPMQRDLKLELSKIKKVAPAHIFLGNGSDEAIDLVFRAFCEPGRDNVVAIDPTYGMYQVCADVNDVEYRKVLLHDDFQFSADELLAVADERTKMIFLCSPNNPTGNDLLRSEIIKVINDFEGLVILDEAYNDFSDEPSFLSELGKYPNLIILQTFSKAFGCAAIRLGMAFASEGIIGVLNKIKYPYNVNQLTQQQAIEMLHKYYEIERWVKTLKEERGYLEEAFVELPWVLQVFPSNANFFLARVTDAVKIYNYLVGEGIIVRNRNSISLCGNCLRVTVGTRAENAKLIGALKKYQ.

The residue at position 206 (lysine 206) is an N6-(pyridoxal phosphate)lysine.

It belongs to the class-II pyridoxal-phosphate-dependent aminotransferase family. Histidinol-phosphate aminotransferase subfamily. As to quaternary structure, homodimer. It depends on pyridoxal 5'-phosphate as a cofactor.

The enzyme catalyses L-histidinol phosphate + 2-oxoglutarate = 3-(imidazol-4-yl)-2-oxopropyl phosphate + L-glutamate. It functions in the pathway amino-acid biosynthesis; L-histidine biosynthesis; L-histidine from 5-phospho-alpha-D-ribose 1-diphosphate: step 7/9. This is Histidinol-phosphate aminotransferase from Bacteroides fragilis (strain ATCC 25285 / DSM 2151 / CCUG 4856 / JCM 11019 / LMG 10263 / NCTC 9343 / Onslow / VPI 2553 / EN-2).